Here is a 787-residue protein sequence, read N- to C-terminus: Mitochondrial intermediate peptidase (787 aa).

Residues 1 to 36 (MQNKVLRGILFKNVPLGYSYNRSIRHPTFGNSIIRW) constitute a mitochondrion transit peptide. Position 573 (H573) interacts with Zn(2+). The active site involves E574. Residues H577 and H580 each coordinate Zn(2+).

This sequence belongs to the peptidase M3 family. The cofactor is Zn(2+).

The protein resides in the mitochondrion matrix. It carries out the reaction Release of an N-terminal octapeptide as second stage of processing of some proteins imported into the mitochondrion.. Cleaves proteins, imported into the mitochondrion, to their mature size. While most mitochondrial precursor proteins are processed to the mature form in one step by mitochondrial processing peptidase (MPP), the sequential cleavage by MIP of an octapeptide after initial processing by MPP is a required step for a subgroup of nuclear-encoded precursor proteins destined for the matrix or the inner membrane. The chain is Mitochondrial intermediate peptidase (OCT1) from Vanderwaltozyma polyspora (strain ATCC 22028 / DSM 70294 / BCRC 21397 / CBS 2163 / NBRC 10782 / NRRL Y-8283 / UCD 57-17) (Kluyveromyces polysporus).